The chain runs to 84 residues: Kidney-associated antigen 1 (84 aa).

The segment at 31 to 84 (PGAAAAHLPRWPPPQLAASRREAPPLSQRPHRTQGAGSPPETNEKLTNPQVKEK) is disordered. Residues 75–84 (KLTNPQVKEK) are compositionally biased toward polar residues.

Expressed in testis and kidney, and, at lower levels, in urinary bladder and liver. Expressed by a high proportion of tumors of various histologic origin, including melanomas, sarcomas and colorectal carcinomas.

This Homo sapiens (Human) protein is Kidney-associated antigen 1 (KAAG1).